A 394-amino-acid chain; its full sequence is MSKETFQRNKPHINIGTIGHVDHGKTTLTAAITRALSAEGLANFCDYSSIDNTPEEKARGITINASHVEYETPNRHYAHVDCPGHADYVKNMITGAAQMDGAILVVSATDGAMPQTKEHILLARQVGVPYIVVFLNKIDMISQEDAELVDLVEMELSELLEEKGYKGCPIIRGSALKALEGDASYVEKIRELMQAVDDNIPTPEREVDKPFLMPIEDVFSISGRGTVVTGRIERGIVKVGDKVQIVGLRDTRETIVTGVEMFRKELPEGQAGENVGLLLRGIGKNDVERGMVICQPNSVKSHTQFKGAVYILQKEEGGRHKPFFTGYRPQFFFRTTDVTGVVTLPEGTEMVMPGDNVEFEVQLISPVALEEGMRFAIREGGRTIGAGTISKIIA.

The 195-residue stretch at 10–204 (KPHINIGTIG…AVDDNIPTPE (195 aa)) folds into the tr-type G domain. The interval 19–26 (GHVDHGKT) is G1. 19-26 (GHVDHGKT) serves as a coordination point for GTP. Position 26 (Thr26) interacts with Mg(2+). The tract at residues 60 to 64 (GITIN) is G2. The tract at residues 81-84 (DCPG) is G3. GTP is bound by residues 81–85 (DCPGH) and 136–139 (NKID). Residues 136-139 (NKID) are G4. The tract at residues 174–176 (SAL) is G5.

Belongs to the TRAFAC class translation factor GTPase superfamily. Classic translation factor GTPase family. EF-Tu/EF-1A subfamily. In terms of assembly, monomer.

Its subcellular location is the cytoplasm. It catalyses the reaction GTP + H2O = GDP + phosphate + H(+). Functionally, GTP hydrolase that promotes the GTP-dependent binding of aminoacyl-tRNA to the A-site of ribosomes during protein biosynthesis. In Chlamydia caviae (strain ATCC VR-813 / DSM 19441 / 03DC25 / GPIC) (Chlamydophila caviae), this protein is Elongation factor Tu.